The sequence spans 225 residues: uncharacterized protein (225 aa).

Residues 1-48 form a disordered region; it reads MTQLVTRARSARGSTLGEQPRQDQLDFADHTGTAGDGNDGAAAASGPV. The segment covering 20–29 has biased composition (basic and acidic residues); that stretch reads PRQDQLDFAD. The HTH merR-type domain occupies 64–136; it reads GYRGPSACQI…LHNIRVAVDH (73 aa). Residues 201-225 form a disordered region; the sequence is DGGESIAAPEDELASRRKHRDRKIG. A compositionally biased stretch (basic residues) spans 216–225; it reads RRKHRDRKIG.

This is an uncharacterized protein from Mycobacterium tuberculosis (strain CDC 1551 / Oshkosh).